Reading from the N-terminus, the 140-residue chain is Proline-rich nuclear receptor coactivator 2 (140 aa).

The interval 1-81 (MGGGERYNIP…NSNWNAGLSS (81 aa)) is disordered. Polar residues-rich tracts occupy residues 11–38 (DPQSRNASKNQEQQNRQKSKDQNSSQTK) and 59–81 (AMQNGGKTKSLSNNSNWNAGLSS). Residues 100-106 (SEPPSPS) carry the SH3-binding motif.

This sequence belongs to the PNRC family. PNRC2 subfamily. As to quaternary structure, interacts with UPF1/RENT1; preferentially interacts with hyperphosphorylated form. Interacts with DCP1A. Interacts with many nuclear receptors including ESR1, ESRRA, ESRRG, NR3C1/GR, NR5A1, PGR, TR, RAR and RXR. In terms of tissue distribution, strong expression is detected in lung, spleen, ovary, thymus, and colon.

It localises to the nucleus. It is found in the cytoplasm. The protein resides in the P-body. Its function is as follows. Involved in nonsense-mediated mRNA decay (NMD) by acting as a bridge between the mRNA decapping complex and the NMD machinery. May act by targeting the NMD machinery to the P-body and recruiting the decapping machinery to aberrant mRNAs. Required for UPF1/RENT1 localization to the P-body. Plays a role in glucocorticoid receptor-mediated mRNA degradation by interacting with the glucocorticoid receptor NR3C1 in a ligand-dependent manner when it is bound to the 5' UTR of target mRNAs and recruiting the RNA helicase UPF1 and the mRNA-decapping enzyme DCP1A, leading to RNA decay. Also acts as a nuclear receptor coactivator. May play a role in controlling the energy balance between energy storage and energy expenditure. The protein is Proline-rich nuclear receptor coactivator 2 (Pnrc2) of Mus musculus (Mouse).